We begin with the raw amino-acid sequence, 405 residues long: L-rhamnonate dehydratase (405 aa).

H33 and R59 together coordinate substrate. 3 residues coordinate Mg(2+): D226, E252, and E280. H329 serves as the catalytic Proton acceptor. E349 contacts substrate.

Belongs to the mandelate racemase/muconate lactonizing enzyme family. RhamD subfamily. As to quaternary structure, homooctamer; tetramer of dimers. The cofactor is Mg(2+).

The catalysed reaction is L-rhamnonate = 2-dehydro-3-deoxy-L-rhamnonate + H2O. Functionally, catalyzes the dehydration of L-rhamnonate to 2-keto-3-deoxy-L-rhamnonate (KDR). The polypeptide is L-rhamnonate dehydratase (Salmonella typhi).